A 518-amino-acid polypeptide reads, in one-letter code: D-aminopeptidase (518 aa).

Ser62 functions as the Nucleophile in the catalytic mechanism. Lys65 functions as the Proton donor/acceptor in the catalytic mechanism. The interval 477–487 is important for specificity; the sequence is QRSMDAPSPGE. Asp481 contributes to the substrate binding site.

The protein belongs to the peptidase S12 family. Homodimer.

The catalysed reaction is Release of an N-terminal D-amino acid from a peptide, Xaa-|-Yaa-, in which Xaa is preferably D-Ala, D-Ser or D-Thr. D-amino acid amides and methyl esters also are hydrolyzed, as is glycine amide.. With respect to regulation, inhibited by beta-lactam compounds such as 6-aminopenicillic acid, 7-aminocephalosporanic acid, benzylpenicillin and ampicillin. Inhibited by p-chloromercuribenzoate. In terms of biological role, hydrolyzes N-terminal residues in D-amino acid-containing peptides. The protein is D-aminopeptidase of Brucella ovis (strain ATCC 25840 / 63/290 / NCTC 10512).